Consider the following 1130-residue polypeptide: Tyrosine-protein kinase ABL1 (1130 aa).

The interval 1 to 60 (MLEICLKLVGCKSKKGLSSSSSCYLEEALQRPVASDFEPQGLSEAARWNSKENLLAGPSE) is CAP. Leu-2 carries N-myristoyl glycine lipidation. Ser-50 bears the Phosphoserine mark. One can recognise an SH3 domain in the interval 61-121 (NDPNLFVALY…PSNYITPVNS (61 aa)). Tyr-70 is modified (phosphotyrosine; by autocatalysis). Phosphotyrosine is present on residues Tyr-115, Tyr-128, Tyr-139, Tyr-172, Tyr-185, and Tyr-215. In terms of domain architecture, SH2 spans 127-217 (WYHGPVSRNA…GLITTLHYPA (91 aa)). Tyr-226 is subject to Phosphotyrosine; by autocatalysis. Ser-229 bears the Phosphoserine mark. The region spanning 242–493 (ITMKHKLGGG…PSFAEIHQAF (252 aa)) is the Protein kinase domain. 248 to 256 (LGGGQYGEV) provides a ligand contact to ATP. Tyr-253 and Tyr-257 each carry phosphotyrosine. ATP is bound by residues Lys-271 and 316 to 322 (EFMTYGN). Catalysis depends on Asp-363, which acts as the Proton acceptor. The short motif at 381–405 (DFGLSRLMTGDTYTAHAGAKFPIKW) is the Kinase activation loop element. At Tyr-393 the chain carries Phosphotyrosine; by autocatalysis and SRC-type Tyr-kinases. Tyr-413 is modified (phosphotyrosine). Phosphoserine is present on residues Ser-446, Ser-559, and Ser-569. The tract at residues 518–996 (AVSTLLQAPE…SASSALAGDQ (479 aa)) is disordered. Positions 537-566 (RAAEHRDTTDVPEMPHSKGQGESDPLDHEP) are enriched in basic and acidic residues. Positions 586–597 (EDERLLPKDKKT) are enriched in basic and acidic residues. The Nuclear localization signal 1 motif lies at 605-609 (KKKKK). 2 positions are modified to phosphoserine; by PAK2: Ser-618 and Ser-619. Ser-620, Ser-659, and Ser-683 each carry phosphoserine. Basic and acidic residues predominate over residues 620-640 (SFREMDGQPERRGAGEEEGRD). A compositionally biased stretch (polar residues) spans 689-698 (KSSTLTSSRL). Positions 709–715 (SSKRFLR) match the Nuclear localization signal 2 motif. Lys-711 bears the N6-acetyllysine; by EP300 mark. Ser-718 is modified (phosphoserine). A phosphothreonine mark is found at Thr-735 and Thr-751. The segment covering 740–752 (LQSTGRQFDSSTF) has biased composition (polar residues). The span at 755-774 (HKSEKPALPRKRAGENRSDQ) shows a compositional bias: basic and acidic residues. The Nuclear localization signal 3 signature appears at 762-769 (LPRKRAGE). Thr-781 carries the post-translational modification Phosphothreonine. Over residues 788–802 (KKNEEAADEVFKDIM) the composition is skewed to basic and acidic residues. Thr-814, Thr-823, Thr-844, and Thr-852 each carry phosphothreonine. Ser-855 bears the Phosphoserine mark. Residues 869–968 (PAEESRVRRH…VLPATPKPQS (100 aa)) are DNA-binding. Basic and acidic residues predominate over residues 881 to 891 (SSESPGRDKGK). The segment covering 905–915 (ASAGKAGGKPS) has biased composition (low complexity). Ser-917 bears the Phosphoserine mark. The interval 953-1130 (EGLKKPVLPA…VKEISDIVQR (178 aa)) is F-actin-binding. Positions 965–975 (KPQSAKPSGTP) are enriched in polar residues. Ser-977 is subject to Phosphoserine. Residues 984 to 993 (TLPSASSALA) are compositionally biased toward low complexity. The Nuclear export signal motif lies at 1090-1100 (LENNLRELQIC).

The protein belongs to the protein kinase superfamily. Tyr protein kinase family. ABL subfamily. In terms of assembly, interacts with SORBS1 following insulin stimulation. Found in a trimolecular complex containing CDK5 and CABLES1. Interacts with CABLES1 and PSTPIP1. Interacts with ZDHHC16, ITGB1 and HCK. Interacts with STX17; probably phosphorylates STX17. Interacts with INPPL1/SHIP2. Interacts with the 14-3-3 proteins, YWHAB, YWHAE, YWHAG, YWHAH, SFN and YWHAZ; the interaction with 14-3-3 proteins requires phosphorylation on Thr-735 and, sequesters ABL1 into the cytoplasm. Interacts with ABI1, ABI2, BCR, CRK, FGR, FYN, HCK, LYN, PSMA7 RAD9A, RAD51, RAD52, TP73 and WASF3. A complex made of ABL1, CTTN and MYLK regulates cortical actin-based cytoskeletal rearrangement critical to sphingosine 1-phosphate (S1P)-mediated endothelial cell (EC) barrier enhancement. Interacts (via SH3 domain) with CASP9; the interaction is direct and increases in the response of cells to genotoxic stress and ABL1/c-Abl activation. Found in a complex with ABL1, ABL2, CRK and UNC119; leading to the inhibition of CRK phosphorylation by ABL kinases. Interacts with TBX21. Interacts with NEDD9/HEF1; interaction is induced by CXCL12 promotion of ABL-mediated phosphorylation of NEDD9/HEF1. Requires Mg(2+) as cofactor. In terms of processing, acetylated at Lys-711 by EP300 which promotes the cytoplasmic translocation. Post-translationally, phosphorylation at Tyr-70 by members of the SRC family of kinases disrupts SH3 domain-based autoinhibitory interactions and intermolecular associations, such as that with ABI1, and also enhances kinase activity. Phosphorylation at Tyr-226 and Tyr-393 correlate with increased activity. DNA damage-induced activation of ABL1 requires the function of ATM and Ser-446 phosphorylation. Phosphorylation at Ser-569 has been attributed to a CDC2-associated kinase and is coupled to cell division. Phosphorylation at Ser-618 and Ser-619 by PAK2 increases binding to CRK and reduces binding to ABI1. Phosphorylation on Thr-735 is required for binding 14-3-3 proteins for cytoplasmic translocation. Phosphorylated by PRKDC. Polyubiquitinated. Polyubiquitination of ABL1 leads to degradation. As to expression, widely expressed.

The protein resides in the cytoplasm. The protein localises to the cytoskeleton. It localises to the nucleus. It is found in the mitochondrion. Its subcellular location is the nucleus membrane. The enzyme catalyses L-tyrosyl-[protein] + ATP = O-phospho-L-tyrosyl-[protein] + ADP + H(+). Its activity is regulated as follows. Stabilized in the inactive form by an association between the SH3 domain and the SH2-TK linker region, interactions of the N-terminal cap, and contributions from an N-terminal myristoyl group and phospholipids. Activated by autophosphorylation as well as by SRC-family kinase-mediated phosphorylation. Activated by RIN1 binding to the SH2 and SH3 domains. Also stimulated by cell death inducers and DNA-damage. Phosphatidylinositol 4,5-bisphosphate (PIP2), a highly abundant phosphoinositide known to regulate cytoskeletal and membrane proteins, also inhibits the tyrosine kinase activity. Activated by 5-(1,3-diaryl-1H-pyrazol-4-yl)hydantoin, 5-[3-(4-fluorophenyl)-1-phenyl-1H-pyrazol-4-yl]-2,4-imidazolidinedione (DPH). Inhibited by ABI1, whose activity is controlled by ABL1 itself through tyrosine phosphorylation. Also inhibited by imatinib mesylate (Gleevec) which is used for the treatment of chronic myeloid leukemia (CML), and by VX-680, an inhibitor that also acts on imatinib-resistant mutants. Its function is as follows. Non-receptor tyrosine-protein kinase that plays a role in many key processes linked to cell growth and survival such as cytoskeleton remodeling in response to extracellular stimuli, cell motility and adhesion, receptor endocytosis, autophagy, DNA damage response and apoptosis. Coordinates actin remodeling through tyrosine phosphorylation of proteins controlling cytoskeleton dynamics like WASF3 (involved in branch formation); ANXA1 (involved in membrane anchoring); DBN1, DBNL, CTTN, RAPH1 and ENAH (involved in signaling); or MAPT and PXN (microtubule-binding proteins). Phosphorylation of WASF3 is critical for the stimulation of lamellipodia formation and cell migration. Involved in the regulation of cell adhesion and motility through phosphorylation of key regulators of these processes such as BCAR1, CRK, CRKL, DOK1, EFS or NEDD9. Phosphorylates multiple receptor tyrosine kinases and more particularly promotes endocytosis of EGFR, facilitates the formation of neuromuscular synapses through MUSK, inhibits PDGFRB-mediated chemotaxis and modulates the endocytosis of activated B-cell receptor complexes. Other substrates which are involved in endocytosis regulation are the caveolin (CAV1) and RIN1. Moreover, ABL1 regulates the CBL family of ubiquitin ligases that drive receptor down-regulation and actin remodeling. Phosphorylation of CBL leads to increased EGFR stability. Involved in late-stage autophagy by regulating positively the trafficking and function of lysosomal components. ABL1 targets to mitochondria in response to oxidative stress and thereby mediates mitochondrial dysfunction and cell death. In response to oxidative stress, phosphorylates serine/threonine kinase PRKD2 at 'Tyr-717'. ABL1 is also translocated in the nucleus where it has DNA-binding activity and is involved in DNA-damage response and apoptosis. Many substrates are known mediators of DNA repair: DDB1, DDB2, ERCC3, ERCC6, RAD9A, RAD51, RAD52 or WRN. Activates the proapoptotic pathway when the DNA damage is too severe to be repaired. Phosphorylates TP73, a primary regulator for this type of damage-induced apoptosis. Phosphorylates the caspase CASP9 on 'Tyr-153' and regulates its processing in the apoptotic response to DNA damage. Phosphorylates PSMA7 that leads to an inhibition of proteasomal activity and cell cycle transition blocks. ABL1 also acts as a regulator of multiple pathological signaling cascades during infection. Several known tyrosine-phosphorylated microbial proteins have been identified as ABL1 substrates. This is the case of A36R of Vaccinia virus, Tir (translocated intimin receptor) of pathogenic E.coli and possibly Citrobacter, CagA (cytotoxin-associated gene A) of H.pylori, or AnkA (ankyrin repeat-containing protein A) of A.phagocytophilum. Pathogens can highjack ABL1 kinase signaling to reorganize the host actin cytoskeleton for multiple purposes, like facilitating intracellular movement and host cell exit. Finally, functions as its own regulator through autocatalytic activity as well as through phosphorylation of its inhibitor, ABI1. Regulates T-cell differentiation in a TBX21-dependent manner. Positively regulates chemokine-mediated T-cell migration, polarization, and homing to lymph nodes and immune-challenged tissues, potentially via activation of NEDD9/HEF1 and RAP1. Phosphorylates TBX21 on tyrosine residues leading to an enhancement of its transcriptional activator activity. This is Tyrosine-protein kinase ABL1 (ABL1) from Homo sapiens (Human).